The following is a 953-amino-acid chain: Ubiquitin carboxyl-terminal hydrolase CYLD (953 aa).

Positions 106 to 590 are interaction with TRIP; it reads CEERFSLFKN…FEIMIGKKKG (485 aa). 2 consecutive CAP-Gly domains span residues 153 to 198 and 253 to 286; these read LAER…VFVA and DVLP…VQLC. Disordered regions lie at residues 313–349 and 384–410; these read PPKL…RNRS and SLTE…LSSE. A compositionally biased stretch (polar residues) spans 337-346; sequence TGSTSDPGTR. A phosphoserine mark is found at serine 384, serine 415, and serine 419. Residues 391 to 466 form an interaction with TRAF2 region; that stretch reads DFGHASPPLQ…LAVSSGNSHG (76 aa). Positions 467-681 are interaction with IKBKG/NEMO; the sequence is LEVGSLAEVK…FTSEEKDPEE (215 aa). Residues 489–532 enclose the CAP-Gly 3 domain; that stretch reads GQPPGLNEVLAGLELEDECAGCTDGTFRGTRYFTCALKKALFVK. The USP domain occupies 589–947; the sequence is KGIQGHYNSC…DAYMCMYQSP (359 aa). Residue cysteine 598 is the Nucleophile of the active site. Residues 778-830 form a B-box region; sequence LEDTPRQCRICGGLAMYECRECYDDPDISAGKIKQFCKTCNAQVHLHPKRLNH. Zn(2+)-binding residues include cysteine 785, cysteine 788, cysteine 796, cysteine 799, cysteine 814, cysteine 817, histidine 822, and histidine 830. The active-site Proton acceptor is histidine 868.

The protein belongs to the peptidase C19 family. In terms of assembly, interacts (via CAP-Gly domain) with IKBKG/NEMO (via proline-rich C-terminal region). Interacts with TRAF2 and TRIP. Interacts with PLK1, DVL1, DVL3, MAVS, TBK1, IKKE and RIGI. Interacts (via CAP-Gly domain) with microtubules. Interacts with HDAC6 and BCL3. Interacts with MAP3K7. Identified in a complex with TRAF6 and SQSTM1. Interacts with OPTN and SQSTM1. Interacts with CEP350. Interacts with RNF31; the interaction is indirect and is mediated via SPATA2. Interacts with SPATA2 (via the PUB domain); the interaction is direct and recruits CYLD to the LUBAC complex, thereby regulating TNF-alpha-induced necroptosis. Phosphorylated on several serine residues by IKKA and/or IKKB in response to immune stimuli. Phosphorylation requires IKBKG. Phosphorylation abolishes TRAF2 deubiquitination, interferes with the activation of Jun kinases, and strongly reduces CD40-dependent gene activation by NF-kappa-B. In terms of processing, ubiquitinated. Polyubiquitinated in hepatocytes treated with palmitic acid. Ubiquitination is mediated by E3 ligase TRIM47 and leads to proteasomal degradation.

The protein resides in the cytoplasm. It is found in the perinuclear region. The protein localises to the cytoskeleton. It localises to the cell membrane. Its subcellular location is the microtubule organizing center. The protein resides in the centrosome. It is found in the spindle. The protein localises to the cilium basal body. The catalysed reaction is Thiol-dependent hydrolysis of ester, thioester, amide, peptide and isopeptide bonds formed by the C-terminal Gly of ubiquitin (a 76-residue protein attached to proteins as an intracellular targeting signal).. Functionally, deubiquitinase that specifically cleaves 'Lys-63'- and linear 'Met-1'-linked polyubiquitin chains and is involved in NF-kappa-B activation and TNF-alpha-induced necroptosis. Negatively regulates NF-kappa-B activation by deubiquitinating upstream signaling factors. Contributes to the regulation of cell survival, proliferation and differentiation via its effects on NF-kappa-B activation. Negative regulator of Wnt signaling. Inhibits HDAC6 and thereby promotes acetylation of alpha-tubulin and stabilization of microtubules. Plays a role in the regulation of microtubule dynamics, and thereby contributes to the regulation of cell proliferation, cell polarization, cell migration, and angiogenesis. Required for normal cell cycle progress and normal cytokinesis. Inhibits nuclear translocation of NF-kappa-B. Plays a role in the regulation of inflammation and the innate immune response, via its effects on NF-kappa-B activation. Dispensable for the maturation of intrathymic natural killer cells, but required for the continued survival of immature natural killer cells. Negatively regulates TNFRSF11A signaling and osteoclastogenesis. Involved in the regulation of ciliogenesis, allowing ciliary basal bodies to migrate and dock to the plasma membrane; this process does not depend on NF-kappa-B activation. Ability to remove linear ('Met-1'-linked) polyubiquitin chains regulates innate immunity and TNF-alpha-induced necroptosis: recruited to the LUBAC complex via interaction with SPATA2 and restricts linear polyubiquitin formation on target proteins. Regulates innate immunity by restricting linear polyubiquitin formation on RIPK2 in response to NOD2 stimulation. Involved in TNF-alpha-induced necroptosis by removing linear ('Met-1'-linked) polyubiquitin chains from RIPK1, thereby regulating the kinase activity of RIPK1. Negatively regulates intestinal inflammation by removing 'Lys-63' linked polyubiquitin chain of NLRP6, thereby reducing the interaction between NLRP6 and PYCARD/ASC and formation of the NLRP6 inflammasome. Does not catalyze deubiquitination of heterotypic 'Lys-63'-/'Lys-48'-linked branched ubiquitin chains. Removes 'Lys-63' linked polyubiquitin chain of MAP3K7, which inhibits phosphorylation and blocks downstream activation of the JNK-p38 kinase cascades. Also removes 'Lys-63'-linked polyubiquitin chains of MAP3K1 and MA3P3K3, which inhibit their interaction with MAP2K1 and MAP2K2. The chain is Ubiquitin carboxyl-terminal hydrolase CYLD (CYLD) from Bos taurus (Bovine).